The primary structure comprises 371 residues: Chaperone protein DnaJ (371 aa).

Positions 5 to 69 constitute a J domain; that stretch reads DYYEVLGLSK…QKRAQYDQFG (65 aa). The CR-type zinc finger occupies 133–215; sequence GKELNVEIPV…CHGSGKVRKR (83 aa). Zn(2+) is bound by residues cysteine 146, cysteine 149, cysteine 163, cysteine 166, cysteine 189, cysteine 192, cysteine 203, and cysteine 206. CXXCXGXG motif repeat units lie at residues 146-153, 163-170, 189-196, and 203-210; these read CDTCKGSG, CKHCSGSG, CSHCSGTG, and CTTCHGSG.

Belongs to the DnaJ family. In terms of assembly, homodimer. Requires Zn(2+) as cofactor.

Its subcellular location is the cytoplasm. Its function is as follows. Participates actively in the response to hyperosmotic and heat shock by preventing the aggregation of stress-denatured proteins and by disaggregating proteins, also in an autonomous, DnaK-independent fashion. Unfolded proteins bind initially to DnaJ; upon interaction with the DnaJ-bound protein, DnaK hydrolyzes its bound ATP, resulting in the formation of a stable complex. GrpE releases ADP from DnaK; ATP binding to DnaK triggers the release of the substrate protein, thus completing the reaction cycle. Several rounds of ATP-dependent interactions between DnaJ, DnaK and GrpE are required for fully efficient folding. Also involved, together with DnaK and GrpE, in the DNA replication of plasmids through activation of initiation proteins. The protein is Chaperone protein DnaJ of Bacillus anthracis (strain A0248).